The following is a 310-amino-acid chain: Beta-ketoacyl-[acyl-carrier-protein] synthase III (310 aa).

Active-site residues include C116 and H239. The segment at 240–244 (QANYR) is ACP-binding. The active site involves N269.

The protein belongs to the thiolase-like superfamily. FabH family. As to quaternary structure, homodimer.

The protein localises to the cytoplasm. The enzyme catalyses malonyl-[ACP] + acetyl-CoA + H(+) = 3-oxobutanoyl-[ACP] + CO2 + CoA. Its pathway is lipid metabolism; fatty acid biosynthesis. Catalyzes the condensation reaction of fatty acid synthesis by the addition to an acyl acceptor of two carbons from malonyl-ACP. Catalyzes the first condensation reaction which initiates fatty acid synthesis and may therefore play a role in governing the total rate of fatty acid production. Possesses both acetoacetyl-ACP synthase and acetyl transacylase activities. Its substrate specificity determines the biosynthesis of branched-chain and/or straight-chain of fatty acids. This is Beta-ketoacyl-[acyl-carrier-protein] synthase III from Acholeplasma laidlawii (strain PG-8A).